We begin with the raw amino-acid sequence, 627 residues long: MLRLESLIVTVWGPATLLARKAPLGQIWMAATLHAKINRKKLDKLDIIQICEEILNPSVPMALRLSGILMGGVVIVYERKVKLLFDDVNRFLVEINGAWRTKSVPDPTLLPKGKTHARKEAVTLPENEEADFGDFEQTRNVPKFGNYMDFQQTFISMRLDESHVNNNPEPEDLGQQFHQADAENITLFEYHGSFQTNNETYDRFERFDIEGDDETQMNSNPREGAEIPTTLIPSPPRHHDIPEGVNPTSPQRQEQQENRRDGFAEQMEEQNIPDKEEHDRPQPAKKRARKTATSAMDYEQTIIAGHVYQSWLQDTSDILCRGEKRKVRGTIRPDMESFKRANMPPTQLFEKDSSYPPQLYQLWSKNTQVLQTSSSESRHPDLRAEQSPGFVQERMHNHHQTDHHERSDTSSQNLDSPAEILRTVRTGKGASVESMMAGSRASPETINRQAADINVTPFYSGDDVRSMPSTPSARGAASINNIEISSKSRMPNRKRPNSSPRRGLEPVAEERPWEHREYEFEFSMLPEKRFTADKEILFETASTQTQKPVCNQSDEMITDSIKSHLKTHFETPGAPQVESLNKLAVGMDRNAAAKLFFQSCVLATRGVIKVNQAEPYGDILIARGPNM.

Disordered stretches follow at residues 211–294, 395–416, and 461–510; these read GDDE…TATS, MHNHHQTDHHERSDTSSQNLDS, and GDDV…VAEE. 3 stretches are compositionally biased toward basic and acidic residues: residues 254 to 263, 272 to 282, and 395 to 408; these read EQQENRRDGF, IPDKEEHDRPQ, and MHNHHQTDHHERSD. A compositionally biased stretch (polar residues) spans 467-487; the sequence is MPSTPSARGAASINNIEISSK.

This sequence belongs to the rad21 family. In terms of assembly, component of the cohesin complex. In terms of tissue distribution, isoform 2 is expressed at low levels in buds, leaves and roots, whereas expression of isoform 1 is confined to buds.

It localises to the nucleus. Its function is as follows. Involved in chromosome condensation, pairing and segregation during meiosis. Responsible for cohesion between replicated sister chromatids. In Arabidopsis thaliana (Mouse-ear cress), this protein is Sister chromatid cohesion 1 protein 1 (SYN1).